The chain runs to 85 residues: U4-theraphotoxin-Hhn1r (85 aa).

The N-terminal stretch at 1–22 (MKVTLIAILTCAAVLVLHTTAA) is a signal peptide. Residues 23 to 48 (EELEAESQLMEVGMPDTELAAVDEER) constitute a propeptide that is removed on maturation. 3 cysteine pairs are disulfide-bonded: C52-C66, C56-C77, and C71-C82.

This sequence belongs to the neurotoxin 12 (Hwtx-2) family. 02 (Hwtx-2) subfamily. Expressed by the venom gland.

Its subcellular location is the secreted. Postsynaptic neurotoxin. In Cyriopagopus hainanus (Chinese bird spider), this protein is U4-theraphotoxin-Hhn1r.